Consider the following 908-residue polypeptide: Protein translocase subunit SecA (908 aa).

Residues glutamine 87, 105 to 109 (GEGKT), and aspartate 512 each bind ATP. Residues 882–908 (DGEKVGRNDPCPCGSGKKYKQCHGKLT) are disordered. Positions 892, 894, 903, and 904 each coordinate Zn(2+). Residues 898-908 (KKYKQCHGKLT) are compositionally biased toward basic residues.

Belongs to the SecA family. Monomer and homodimer. Part of the essential Sec protein translocation apparatus which comprises SecA, SecYEG and auxiliary proteins SecDF-YajC and YidC. Zn(2+) serves as cofactor.

Its subcellular location is the cell inner membrane. It is found in the cytoplasm. It catalyses the reaction ATP + H2O + cellular proteinSide 1 = ADP + phosphate + cellular proteinSide 2.. Functionally, part of the Sec protein translocase complex. Interacts with the SecYEG preprotein conducting channel. Has a central role in coupling the hydrolysis of ATP to the transfer of proteins into and across the cell membrane, serving both as a receptor for the preprotein-SecB complex and as an ATP-driven molecular motor driving the stepwise translocation of polypeptide chains across the membrane. The chain is Protein translocase subunit SecA from Shewanella amazonensis (strain ATCC BAA-1098 / SB2B).